The primary structure comprises 434 residues: Methylenetetrahydrofolate--tRNA-(uracil-5-)-methyltransferase TrmFO (434 aa).

Residue G10–G15 coordinates FAD.

The protein belongs to the MnmG family. TrmFO subfamily. Requires FAD as cofactor.

It localises to the cytoplasm. The enzyme catalyses uridine(54) in tRNA + (6R)-5,10-methylene-5,6,7,8-tetrahydrofolate + NADH + H(+) = 5-methyluridine(54) in tRNA + (6S)-5,6,7,8-tetrahydrofolate + NAD(+). The catalysed reaction is uridine(54) in tRNA + (6R)-5,10-methylene-5,6,7,8-tetrahydrofolate + NADPH + H(+) = 5-methyluridine(54) in tRNA + (6S)-5,6,7,8-tetrahydrofolate + NADP(+). In terms of biological role, catalyzes the folate-dependent formation of 5-methyl-uridine at position 54 (M-5-U54) in all tRNAs. This chain is Methylenetetrahydrofolate--tRNA-(uracil-5-)-methyltransferase TrmFO, found in Bacillus cytotoxicus (strain DSM 22905 / CIP 110041 / 391-98 / NVH 391-98).